The primary structure comprises 331 residues: Holliday junction branch migration complex subunit RuvB (331 aa).

The tract at residues 1-182 (MDDRMVDQAL…FGVHLRLEYY (182 aa)) is large ATPase domain (RuvB-L). ATP is bound by residues L21, R22, G63, K66, T67, T68, 129-131 (EDF), R172, Y182, and R219. Residue T67 coordinates Mg(2+). The small ATPAse domain (RuvB-S) stretch occupies residues 183 to 253 (NENDLKEIII…TTKQALQLLQ (71 aa)). The head domain (RuvB-H) stretch occupies residues 256-331 (AEGLDYIDHK…AYEHFKNFNK (76 aa)). 3 residues coordinate DNA: R292, R311, and R316.

Belongs to the RuvB family. As to quaternary structure, homohexamer. Forms an RuvA(8)-RuvB(12)-Holliday junction (HJ) complex. HJ DNA is sandwiched between 2 RuvA tetramers; dsDNA enters through RuvA and exits via RuvB. An RuvB hexamer assembles on each DNA strand where it exits the tetramer. Each RuvB hexamer is contacted by two RuvA subunits (via domain III) on 2 adjacent RuvB subunits; this complex drives branch migration. In the full resolvosome a probable DNA-RuvA(4)-RuvB(12)-RuvC(2) complex forms which resolves the HJ.

The protein resides in the cytoplasm. It carries out the reaction ATP + H2O = ADP + phosphate + H(+). Its function is as follows. The RuvA-RuvB-RuvC complex processes Holliday junction (HJ) DNA during genetic recombination and DNA repair, while the RuvA-RuvB complex plays an important role in the rescue of blocked DNA replication forks via replication fork reversal (RFR). RuvA specifically binds to HJ cruciform DNA, conferring on it an open structure. The RuvB hexamer acts as an ATP-dependent pump, pulling dsDNA into and through the RuvAB complex. RuvB forms 2 homohexamers on either side of HJ DNA bound by 1 or 2 RuvA tetramers; 4 subunits per hexamer contact DNA at a time. Coordinated motions by a converter formed by DNA-disengaged RuvB subunits stimulates ATP hydrolysis and nucleotide exchange. Immobilization of the converter enables RuvB to convert the ATP-contained energy into a lever motion, pulling 2 nucleotides of DNA out of the RuvA tetramer per ATP hydrolyzed, thus driving DNA branch migration. The RuvB motors rotate together with the DNA substrate, which together with the progressing nucleotide cycle form the mechanistic basis for DNA recombination by continuous HJ branch migration. Branch migration allows RuvC to scan DNA until it finds its consensus sequence, where it cleaves and resolves cruciform DNA. The chain is Holliday junction branch migration complex subunit RuvB from Staphylococcus haemolyticus (strain JCSC1435).